The primary structure comprises 343 residues: Heat-inducible transcription repressor HrcA (343 aa).

This sequence belongs to the HrcA family.

In terms of biological role, negative regulator of class I heat shock genes (grpE-dnaK-dnaJ and groELS operons). Prevents heat-shock induction of these operons. This chain is Heat-inducible transcription repressor HrcA, found in Bacillus velezensis (strain DSM 23117 / BGSC 10A6 / LMG 26770 / FZB42) (Bacillus amyloliquefaciens subsp. plantarum).